Consider the following 45-residue polypeptide: Somatoliberin (45 aa).

It belongs to the glucagon family.

It is found in the secreted. Its function is as follows. GRF is released by the hypothalamus and acts on the adenohypophyse to stimulate the secretion of growth hormone. The polypeptide is Somatoliberin (ghrh) (Cyprinus carpio (Common carp)).